We begin with the raw amino-acid sequence, 179 residues long: O-acetyl-ADP-ribose deacetylase (179 aa).

A Macro domain is found at 1-175 (MTSRLQVIQG…LYARLLTQQG (175 aa)). Substrate contacts are provided by residues 11–12 (DI), N25, 33–35 (GVD), and 122–126 (STGVY). Residue D35 is the Proton acceptor of the active site.

Belongs to the MacroD-type family. YmdB subfamily. As to quaternary structure, homodimer. Interacts with RNase III.

The enzyme catalyses 3''-O-acetyl-ADP-D-ribose + H2O = ADP-D-ribose + acetate + H(+). It carries out the reaction 2''-O-acetyl-ADP-D-ribose + H2O = ADP-D-ribose + acetate + H(+). Its function is as follows. Deacetylates O-acetyl-ADP ribose to yield ADP-ribose and free acetate. Down-regulates ribonuclease 3 (RNase III) activity. Acts by interacting directly with the region of the ribonuclease that is required for dimerization/activation. The polypeptide is O-acetyl-ADP-ribose deacetylase (Salmonella gallinarum (strain 287/91 / NCTC 13346)).